A 359-amino-acid polypeptide reads, in one-letter code: 3-dehydroquinate synthase (359 aa).

NAD(+)-binding positions include 71 to 76, 105 to 109, 129 to 130, K142, and K151; these read DGEAYK, GVIGD, and TT. E184, H247, and H264 together coordinate Zn(2+).

This sequence belongs to the sugar phosphate cyclases superfamily. Dehydroquinate synthase family. Requires Co(2+) as cofactor. The cofactor is Zn(2+). It depends on NAD(+) as a cofactor.

It localises to the cytoplasm. It catalyses the reaction 7-phospho-2-dehydro-3-deoxy-D-arabino-heptonate = 3-dehydroquinate + phosphate. It participates in metabolic intermediate biosynthesis; chorismate biosynthesis; chorismate from D-erythrose 4-phosphate and phosphoenolpyruvate: step 2/7. Functionally, catalyzes the conversion of 3-deoxy-D-arabino-heptulosonate 7-phosphate (DAHP) to dehydroquinate (DHQ). This chain is 3-dehydroquinate synthase, found in Burkholderia ambifaria (strain MC40-6).